A 25-amino-acid chain; its full sequence is Xenoposin precursor fragment BM3 (25 aa).

Expressed by the skin glands.

The protein resides in the secreted. Its function is as follows. Antimicrobial peptide. This Xenopus boumbaensis (Mawa clawed frog) protein is Xenoposin precursor fragment BM3.